The primary structure comprises 286 residues: Bifunctional protein FolD (286 aa).

NADP(+)-binding positions include 165 to 167 (GRS) and Ser-190.

The protein belongs to the tetrahydrofolate dehydrogenase/cyclohydrolase family. As to quaternary structure, homodimer.

It carries out the reaction (6R)-5,10-methylene-5,6,7,8-tetrahydrofolate + NADP(+) = (6R)-5,10-methenyltetrahydrofolate + NADPH. The catalysed reaction is (6R)-5,10-methenyltetrahydrofolate + H2O = (6R)-10-formyltetrahydrofolate + H(+). It participates in one-carbon metabolism; tetrahydrofolate interconversion. Catalyzes the oxidation of 5,10-methylenetetrahydrofolate to 5,10-methenyltetrahydrofolate and then the hydrolysis of 5,10-methenyltetrahydrofolate to 10-formyltetrahydrofolate. In Paraburkholderia phytofirmans (strain DSM 17436 / LMG 22146 / PsJN) (Burkholderia phytofirmans), this protein is Bifunctional protein FolD.